A 118-amino-acid chain; its full sequence is Large ribosomal subunit protein bL20c (118 aa).

The protein belongs to the bacterial ribosomal protein bL20 family.

The protein resides in the plastid. In terms of biological role, binds directly to 23S ribosomal RNA and is necessary for the in vitro assembly process of the 50S ribosomal subunit. It is not involved in the protein synthesizing functions of that subunit. The sequence is that of Large ribosomal subunit protein bL20c from Aneura mirabilis (Parasitic liverwort).